The sequence spans 304 residues: tRNA dimethylallyltransferase (304 aa).

9 to 16 (APTAAGKS) provides a ligand contact to ATP. A substrate-binding site is contributed by 11-16 (TAAGKS).

This sequence belongs to the IPP transferase family. In terms of assembly, monomer. Mg(2+) serves as cofactor.

It catalyses the reaction adenosine(37) in tRNA + dimethylallyl diphosphate = N(6)-dimethylallyladenosine(37) in tRNA + diphosphate. In terms of biological role, catalyzes the transfer of a dimethylallyl group onto the adenine at position 37 in tRNAs that read codons beginning with uridine, leading to the formation of N6-(dimethylallyl)adenosine (i(6)A). This chain is tRNA dimethylallyltransferase, found in Deinococcus geothermalis (strain DSM 11300 / CIP 105573 / AG-3a).